The following is a 505-amino-acid chain: ATP synthase subunit beta, mitochondrial (505 aa).

184–191 (GGAGVGKT) provides a ligand contact to ATP.

Belongs to the ATPase alpha/beta chains family. As to quaternary structure, F-type ATPases have 2 components, CF(1) - the catalytic core - and CF(0) - the membrane proton channel. CF(1) has five subunits: alpha(3), beta(3), gamma(1), delta(1), epsilon(1). CF(0) has three main subunits: a, b and c.

Its subcellular location is the mitochondrion. It localises to the mitochondrion inner membrane. The enzyme catalyses ATP + H2O + 4 H(+)(in) = ADP + phosphate + 5 H(+)(out). Mitochondrial membrane ATP synthase (F(1)F(0) ATP synthase or Complex V) produces ATP from ADP in the presence of a proton gradient across the membrane which is generated by electron transport complexes of the respiratory chain. F-type ATPases consist of two structural domains, F(1) - containing the extramembraneous catalytic core, and F(0) - containing the membrane proton channel, linked together by a central stalk and a peripheral stalk. During catalysis, ATP synthesis in the catalytic domain of F(1) is coupled via a rotary mechanism of the central stalk subunits to proton translocation. Subunits alpha and beta form the catalytic core in F(1). Rotation of the central stalk against the surrounding alpha(3)beta(3) subunits leads to hydrolysis of ATP in three separate catalytic sites on the beta subunits. This Kluyveromyces lactis (strain ATCC 8585 / CBS 2359 / DSM 70799 / NBRC 1267 / NRRL Y-1140 / WM37) (Yeast) protein is ATP synthase subunit beta, mitochondrial (ATP2).